A 145-amino-acid polypeptide reads, in one-letter code: Sec-independent protein translocase protein TatB (145 aa).

Residues 1-21 traverse the membrane as a helical segment; it reads MLDVGMTELLCFAIIAILVLG.

Belongs to the TatB family. In terms of assembly, the Tat system comprises two distinct complexes: a TatABC complex, containing multiple copies of TatA, TatB and TatC subunits, and a separate TatA complex, containing only TatA subunits. Substrates initially bind to the TatABC complex, which probably triggers association of the separate TatA complex to form the active translocon.

Its subcellular location is the cell inner membrane. Part of the twin-arginine translocation (Tat) system that transports large folded proteins containing a characteristic twin-arginine motif in their signal peptide across membranes. Together with TatC, TatB is part of a receptor directly interacting with Tat signal peptides. TatB may form an oligomeric binding site that transiently accommodates folded Tat precursor proteins before their translocation. The protein is Sec-independent protein translocase protein TatB of Acinetobacter baumannii (strain ATCC 17978 / DSM 105126 / CIP 53.77 / LMG 1025 / NCDC KC755 / 5377).